The sequence spans 361 residues: Peptide chain release factor 1 (361 aa).

Residue Gln235 is modified to N5-methylglutamine. Positions 287-309 (QKEASAMRSAQVGSGDRSERIRT) are disordered.

This sequence belongs to the prokaryotic/mitochondrial release factor family. Post-translationally, methylated by PrmC. Methylation increases the termination efficiency of RF1.

Its subcellular location is the cytoplasm. Peptide chain release factor 1 directs the termination of translation in response to the peptide chain termination codons UAG and UAA. The polypeptide is Peptide chain release factor 1 (Chlamydia caviae (strain ATCC VR-813 / DSM 19441 / 03DC25 / GPIC) (Chlamydophila caviae)).